The primary structure comprises 281 residues: Clc-like protein 5 (281 aa).

The next 4 helical transmembrane spans lie at Leu13–Pro33, Val104–Phe124, Ile137–Phe157, and Tyr184–Val204.

The protein belongs to the Clc family.

The protein resides in the membrane. This is Clc-like protein 5 (clc-5) from Caenorhabditis elegans.